The sequence spans 31 residues: Cytochrome b6-f complex subunit 6 (31 aa).

Residues 4–24 (LLSYFAFLMLALTFTLALFVG) traverse the membrane as a helical segment.

The protein belongs to the PetL family. The 4 large subunits of the cytochrome b6-f complex are cytochrome b6, subunit IV (17 kDa polypeptide, PetD), cytochrome f and the Rieske protein, while the 4 small subunits are PetG, PetL, PetM and PetN. The complex functions as a dimer.

It is found in the plastid. It localises to the chloroplast thylakoid membrane. In terms of biological role, component of the cytochrome b6-f complex, which mediates electron transfer between photosystem II (PSII) and photosystem I (PSI), cyclic electron flow around PSI, and state transitions. PetL is important for photoautotrophic growth as well as for electron transfer efficiency and stability of the cytochrome b6-f complex. The protein is Cytochrome b6-f complex subunit 6 of Adiantum capillus-veneris (Maidenhair fern).